A 66-amino-acid chain; its full sequence is Large ribosomal subunit protein bL31 (66 aa).

Zn(2+) contacts are provided by Cys16, Cys18, Cys36, and Cys39.

The protein belongs to the bacterial ribosomal protein bL31 family. Type A subfamily. In terms of assembly, part of the 50S ribosomal subunit. Zn(2+) is required as a cofactor.

Its function is as follows. Binds the 23S rRNA. This is Large ribosomal subunit protein bL31 from Sulfurimonas denitrificans (strain ATCC 33889 / DSM 1251) (Thiomicrospira denitrificans (strain ATCC 33889 / DSM 1251)).